Reading from the N-terminus, the 57-residue chain is MTPLRPTRPCPECGKPSTREAYPFCSPRCKNIDLNRWLSGSYVIAGKPLGEEDENDS.

4 residues coordinate Zn(2+): Cys-10, Cys-13, Cys-25, and Cys-29.

The protein belongs to the DNA gyrase inhibitor YacG family. As to quaternary structure, interacts with GyrB. It depends on Zn(2+) as a cofactor.

Inhibits all the catalytic activities of DNA gyrase by preventing its interaction with DNA. Acts by binding directly to the C-terminal domain of GyrB, which probably disrupts DNA binding by the gyrase. The chain is DNA gyrase inhibitor YacG from Brucella melitensis biotype 1 (strain ATCC 23456 / CCUG 17765 / NCTC 10094 / 16M).